Consider the following 1273-residue polypeptide: Probable methionine synthase (1273 aa).

Residues 7–327 form the Hcy-binding domain; the sequence is FKELADIAKE…DHINAMYKAV (321 aa). Residues C249, C312, and C313 each contribute to the Zn(2+) site. Positions 360–621 constitute a Pterin-binding domain; the sequence is FVNIGERCNV…IDKPLLQLLE (262 aa). The region spanning 652 to 749 is the B12-binding N-terminal domain; sequence KTDEWRNTSV…FMDAERQANI (98 aa). Methylcob(III)alamin contacts are provided by residues E699, 772–776, H775, S820, T824, and A876; that span reads GDVHD. Residues 762-897 form the B12-binding domain; it reads QGTVVIATVK…DMTVRDAFLQ (136 aa). The region spanning 927–1273 is the AdoMet activation domain; sequence SLKDRRFVAL…LSPIIGYELD (347 aa). S-adenosyl-L-methionine is bound by residues D977, R1171, and 1225–1226; that span reads YF.

It belongs to the vitamin-B12 dependent methionine synthase family. Methylcob(III)alamin is required as a cofactor. The cofactor is Zn(2+).

It catalyses the reaction (6S)-5-methyl-5,6,7,8-tetrahydrofolate + L-homocysteine = (6S)-5,6,7,8-tetrahydrofolate + L-methionine. Its pathway is amino-acid biosynthesis; L-methionine biosynthesis via de novo pathway; L-methionine from L-homocysteine (MetH route): step 1/1. Its function is as follows. Catalyzes the transfer of a methyl group from methyl-cobalamin to homocysteine, yielding enzyme-bound cob(I)alamin and methionine. Subsequently, remethylates the cofactor using methyltetrahydrofolate. In Caenorhabditis briggsae, this protein is Probable methionine synthase (metr-1).